The following is a 549-amino-acid chain: Urocanate hydratase (549 aa).

NAD(+) contacts are provided by residues 46-47 (GG), glutamine 124, 170-172 (GMG), glutamate 190, arginine 195, 236-237 (NA), 257-261 (QTSAH), 267-268 (YV), and tyrosine 316. Cysteine 404 is a catalytic residue. Glycine 486 contributes to the NAD(+) binding site.

This sequence belongs to the urocanase family. NAD(+) is required as a cofactor.

The protein resides in the cytoplasm. It catalyses the reaction 4-imidazolone-5-propanoate = trans-urocanate + H2O. It functions in the pathway amino-acid degradation; L-histidine degradation into L-glutamate; N-formimidoyl-L-glutamate from L-histidine: step 2/3. Catalyzes the conversion of urocanate to 4-imidazolone-5-propionate. The polypeptide is Urocanate hydratase (Caldanaerobacter subterraneus subsp. tengcongensis (strain DSM 15242 / JCM 11007 / NBRC 100824 / MB4) (Thermoanaerobacter tengcongensis)).